Consider the following 454-residue polypeptide: MHWGMEMNVEQAIEYVKKNNVKFIRFQFVDILGFPKNVAYPVKAGEKGIEELREIFENGVWFDGSSITGFVGIEESDMLLKPDLSTLSVLPWRPEEKSVARVICDVYKDEKTPFEGDPRSRLKAILEELKKEMNGEYFVGPEPEFFLLKRDPHNPHRWVPADDGGYFDVEPLDDAPDIRRDIVLALENLGFHVEASHHEVAPGQHEVDFKFDNALKTADSVITFKMTIKNIAKKHGLKATFMPKPFFGMNGNGMHCHQSVWFNGEPSFYDPEGPYNGLSETCLSYIAGILSHAKALVAITNPTVNSYKRLVPGYEAPVNIAWANKNRSAIIRVPAARGKATRIEFRAPDPTCNPYLAFACMLAAGLDGIKKKMTAPEPVERNIFKMSEEEKKQLGIESVPANLAAALDELECDEVLQKALGKHIYENYMEIKRAEWDDFRTAVTDWETGKYLIY.

The GS beta-grasp domain occupies 19-111 (NNVKFIRFQF…VICDVYKDEK (93 aa)). Residues 118–454 (PRSRLKAILE…DWETGKYLIY (337 aa)) enclose the GS catalytic domain. 2 residues coordinate Mg(2+): E142 and E144. An ATP-binding site is contributed by E194. The Mg(2+) site is built by E199 and E206. L-glutamate contacts are provided by residues 250 to 251 (NG) and G251. Residue H255 coordinates Mg(2+). Residues 257 to 259 (HQS) and S259 contribute to the ATP site. L-glutamate is bound by residues R309, E315, and R327. The ATP site is built by R327, R332, and K339. Residue E344 coordinates Mg(2+). An L-glutamate-binding site is contributed by R346.

The protein belongs to the glutamine synthetase family. As to quaternary structure, oligomer of 12 subunits arranged in the form of two hexagons. Requires Mg(2+) as cofactor.

The protein localises to the cytoplasm. It carries out the reaction L-glutamate + NH4(+) + ATP = L-glutamine + ADP + phosphate + H(+). Feedback inhibited by glycine and alanine, and inhibited by low concentrations of methionine sulfoximine. In terms of biological role, probably involved in nitrogen metabolism via ammonium assimilation. Catalyzes the ATP-dependent biosynthesis of glutamine from glutamate and ammonia. Beta-glutamate is a much poorer substrate than alpha-glutamate. The sequence is that of Glutamine synthetase from Methanocaldococcus jannaschii (strain ATCC 43067 / DSM 2661 / JAL-1 / JCM 10045 / NBRC 100440) (Methanococcus jannaschii).